The sequence spans 65 residues: VVYTDCTESGQNLCLCEDSNVCGQGNKCILGSNGEKNQCVTGEGTPKPQSHNDGDFEEIPEEYLQ.

An interaction with thrombin active site region spans residues 1-3 (VVY). 3 disulfides stabilise this stretch: C6–C14, C16–C28, and C22–C39. The tract at residues 39-65 (CVTGEGTPKPQSHNDGDFEEIPEEYLQ) is disordered. T45 carries O-linked (GalNAc...) threonine glycosylation. The interaction with fibrinogen-binding exosite of thrombin stretch occupies residues 55-65 (DFEEIPEEYLQ). Residues 55–65 (DFEEIPEEYLQ) show a composition bias toward acidic residues. At Y63 the chain carries Sulfotyrosine.

Belongs to the protease inhibitor I14 (hirudin) family.

The protein localises to the secreted. Its function is as follows. Hirudin is a potent thrombin-specific protease inhibitor. It forms a stable non-covalent complex with alpha-thrombin, thereby abolishing its ability to cleave fibrinogen. The polypeptide is Hirudin-3 (Hirudo medicinalis (Medicinal leech)).